A 171-amino-acid polypeptide reads, in one-letter code: Large ribosomal subunit protein uL10 (171 aa).

The protein belongs to the universal ribosomal protein uL10 family. Part of the ribosomal stalk of the 50S ribosomal subunit. The N-terminus interacts with L11 and the large rRNA to form the base of the stalk. The C-terminus forms an elongated spine to which L12 dimers bind in a sequential fashion forming a multimeric L10(L12)X complex.

Its function is as follows. Forms part of the ribosomal stalk, playing a central role in the interaction of the ribosome with GTP-bound translation factors. The chain is Large ribosomal subunit protein uL10 from Phenylobacterium zucineum (strain HLK1).